Reading from the N-terminus, the 78-residue chain is Sec-independent protein translocase protein TatA (78 aa).

The chain crosses the membrane as a helical span at residues 1-21; that stretch reads MGSLSIWHWIVVIAVVLLLFG. Positions 43-60 are enriched in basic and acidic residues; that stretch reads LQDDEKTAEKSEPVKSID. A disordered region spans residues 43–78; the sequence is LQDDEKTAEKSEPVKSIDHTSTPGATNRTDVGSKAV. Residues 61-72 show a composition bias toward polar residues; it reads HTSTPGATNRTD.

This sequence belongs to the TatA/E family. The Tat system comprises two distinct complexes: a TatABC complex, containing multiple copies of TatA, TatB and TatC subunits, and a separate TatA complex, containing only TatA subunits. Substrates initially bind to the TatABC complex, which probably triggers association of the separate TatA complex to form the active translocon.

It localises to the cell inner membrane. Its function is as follows. Part of the twin-arginine translocation (Tat) system that transports large folded proteins containing a characteristic twin-arginine motif in their signal peptide across membranes. TatA could form the protein-conducting channel of the Tat system. The sequence is that of Sec-independent protein translocase protein TatA from Rhodopseudomonas palustris (strain ATCC BAA-98 / CGA009).